Reading from the N-terminus, the 386-residue chain is Caspase-1-A (386 aa).

A propeptide spanning residues 1–100 is cleaved from the precursor; sequence MTAQLNKVRR…PPMAPVPIQE (100 aa). Residues 22–88 form the CARD domain; that stretch reads SDLLDDLREK…HKTLAKSLGL (67 aa). Active-site residues include H218 and C274. The propeptide occupies 287 to 296; it reads DVASPPLEDD.

This sequence belongs to the peptidase C14A family. Heterotetramer that consists of two anti-parallel arranged heterodimers, each one formed by a 20 kDa (Caspase-1 subunit p20) and a 10 kDa (Caspase-1 subunit p10) subunit. In terms of assembly, heterotetramer that consists of two anti-parallel arranged heterodimers, each one formed by a 20 kDa (Caspase-1 subunit p20) and a 10 kDa (Caspase-1 subunit p10) subunit. Can form a heterodimer with isoform epsilon which then has an inhibitory effect. In terms of processing, the two subunits are derived from the precursor sequence by an autocatalytic mechanism.

Its subcellular location is the cytoplasm. It localises to the cell membrane. The enzyme catalyses Strict requirement for an Asp residue at position P1 and has a preferred cleavage sequence of Tyr-Val-Ala-Asp-|-.. Its function is as follows. Thiol protease involved in a variety of inflammatory processes by proteolytically cleaving other proteins, such as the precursors of the inflammatory cytokines interleukin-1 beta (IL1B) and interleukin 18 (IL18) as well as the pyroptosis inducer Gasdermin-D (GSDMD), into active mature peptides. Plays a key role in cell immunity as an inflammatory response initiator: once activated through formation of an inflammasome complex, it initiates a pro-inflammatory response through the cleavage of the two inflammatory cytokines IL1B and IL18, releasing the mature cytokines which are involved in a variety of inflammatory processes. Cleaves a tetrapeptide after an Asp residue at position P1. Also initiates pyroptosis, a programmed lytic cell death pathway, through cleavage of GSDMD. This chain is Caspase-1-A (casp1-a), found in Xenopus laevis (African clawed frog).